The primary structure comprises 345 residues: Viral Fc-gamma receptor-like protein UL119 (345 aa).

A signal peptide spans 1–23; that stretch reads MCSVLAIALVVALLGDMHPGVKS. A disordered region spans residues 23–43; that stretch reads SSTTSAVTSPSNTTVTSTTSI. Residues 24-293 are Virion surface-facing; that stretch reads STTSAVTSPS…IKSDPLFEDR (270 aa). N-linked (GlcNAc...) asparagine; by host glycosylation is found at Asn-34, Asn-48, Asn-95, Asn-104, Asn-148, Asn-179, Asn-198, Asn-217, Asn-225, Asn-241, Asn-244, and Asn-260. One can recognise an Ig-like V-type domain in the interval 91 to 190; it reads QVSLNATCKV…TWDLFTYPIY (100 aa). A helical transmembrane segment spans residues 294–314; it reads LLAYGVLAFLVFMVIILLYVT. Residues 315 to 345 are Intravirion-facing; sequence YMLARRRDWSYKRLEEPVEEKKHPVPYFKQW.

It localises to the virion membrane. In terms of biological role, serves as a receptor for the Fc part of human IgG. May thus be involved in interfering with host Ig-mediated immune responses. This Homo sapiens (Human) protein is Viral Fc-gamma receptor-like protein UL119 (UL119/UL118).